A 1052-amino-acid chain; its full sequence is Fibroblast growth factor receptor homolog 2 (1052 aa).

The signal sequence occupies residues 1–19 (MAKVPITLVMIIAIVSAAA). At 20 to 600 (DLGCDYGHHR…EIYALLHAHP (581 aa)) the chain is on the extracellular side. 3 consecutive Ig-like C2-type domains span residues 23 to 117 (CDYG…IASF), 124 to 230 (PALP…PTQL), and 240 to 340 (PMLK…RTVA). A disulfide bond links Cys30 and Cys90. Residues Asn99, Asn137, Asn175, Asn181, Asn249, and Asn257 are each glycosylated (N-linked (GlcNAc...) asparagine). A disulfide bond links Cys164 and Cys217. Cys262 and Cys329 are joined by a disulfide. Over residues 358-372 (TTTTTVASPIPTAST) the composition is skewed to low complexity. The interval 358 to 393 (TTTTTVASPIPTASTGEDNDDDVENPAAEASGGVGP) is disordered. Ig-like C2-type domains lie at 393–478 (PPVF…FSVQ) and 487–585 (PIIV…RVVS). Cysteines 416 and 462 form a disulfide. Residues Asn423, Asn444, Asn494, Asn500, Asn526, Asn541, Asn546, Asn555, and Asn576 are each glycosylated (N-linked (GlcNAc...) asparagine). Cys507 and Cys566 form a disulfide bridge. Residues 601 to 626 (LGFTLAAITIVALFLLGSAFITFMLR) form a helical membrane-spanning segment. Residues 627 to 1052 (RLRREKLLKL…LRYQYTYKFN (426 aa)) are Cytoplasmic-facing. The 289-residue stretch at 712–1000 (LSLGSILGEG…ELVESFDGIL (289 aa)) folds into the Protein kinase domain. Residues 718-726 (LGEGAFGRV) and Lys748 contribute to the ATP site. Asp864 (proton acceptor) is an active-site residue. A Phosphotyrosine; by autocatalysis modification is found at Tyr895. Positions 1017–1038 (PMLETPPSSGDEDDGSDTETFR) are disordered.

The protein belongs to the protein kinase superfamily. Tyr protein kinase family. Fibroblast growth factor receptor subfamily. In terms of tissue distribution, during embryogenesis, expression is seen in mesoderm, endodermal precursor cells, CNS midline cells and trachea and salivary duct ectodermal cells.

The protein localises to the membrane. The enzyme catalyses L-tyrosyl-[protein] + ATP = O-phospho-L-tyrosyl-[protein] + ADP + H(+). Its function is as follows. May be required for patterning of muscle precursor cells: generation of mesodermal and endodermal layers, invaginations of various types of cells, and CNS formation. Essential for the ability of the migrating tracheal and midline cells to recognize external guiding cues. The polypeptide is Fibroblast growth factor receptor homolog 2 (btl) (Drosophila melanogaster (Fruit fly)).